The sequence spans 632 residues: Pheromone-processing carboxypeptidase kex1 (632 aa).

An N-terminal signal peptide occupies residues 1–38 (MLLTTPSSRGSRAQSGIANVSWLALSLLLLFSPTLGSA). The Lumenal segment spans residues 39-523 (KSAADYYVRS…KETEWKAYAK (485 aa)). Asparagine 119 and asparagine 126 each carry an N-linked (GlcNAc...) asparagine glycan. Residues serine 190 and aspartate 390 contribute to the active site. 2 N-linked (GlcNAc...) asparagine glycosylation sites follow: asparagine 441 and asparagine 449. The active site involves histidine 452. The tract at residues 480-509 (KPADSRIDGEKLPQTSVGGHPNSTAAEQQA) is disordered. The segment covering 492-506 (PQTSVGGHPNSTAAE) has biased composition (polar residues). An N-linked (GlcNAc...) asparagine glycan is attached at asparagine 501. The chain crosses the membrane as a helical span at residues 524 to 544 (SGEAALIVVIIGVTVWGFFIW). Topologically, residues 545 to 632 (RSRRRNRGYQ…SSTKPGGAQP (88 aa)) are cytoplasmic. The disordered stretch occupies residues 574–632 (RSGPADVEAGDFDESELDNLHSPGLEQEHYAVGDDSDEESPNHQPAAPPSSTKPGGAQP). The segment covering 581-590 (EAGDFDESEL) has biased composition (acidic residues).

Belongs to the peptidase S10 family.

The protein resides in the golgi apparatus. It localises to the trans-Golgi network membrane. The enzyme catalyses Preferential release of a C-terminal arginine or lysine residue.. Protease with a carboxypeptidase B-like function involved in the C-terminal processing of the lysine and arginine residues from protein precursors. Promotes cell fusion and is involved in the programmed cell death. The sequence is that of Pheromone-processing carboxypeptidase kex1 (kex1) from Aspergillus fumigatus (strain CBS 144.89 / FGSC A1163 / CEA10) (Neosartorya fumigata).